Consider the following 237-residue polypeptide: Ribonuclease PH (237 aa).

Phosphate is bound by residues Arg86 and 124 to 126 (GTR).

The protein belongs to the RNase PH family. Homohexameric ring arranged as a trimer of dimers.

It catalyses the reaction tRNA(n+1) + phosphate = tRNA(n) + a ribonucleoside 5'-diphosphate. Its function is as follows. Phosphorolytic 3'-5' exoribonuclease that plays an important role in tRNA 3'-end maturation. Removes nucleotide residues following the 3'-CCA terminus of tRNAs; can also add nucleotides to the ends of RNA molecules by using nucleoside diphosphates as substrates, but this may not be physiologically important. Probably plays a role in initiation of 16S rRNA degradation (leading to ribosome degradation) during starvation. The protein is Ribonuclease PH of Nitrobacter hamburgensis (strain DSM 10229 / NCIMB 13809 / X14).